A 305-amino-acid polypeptide reads, in one-letter code: Autophagy-related protein 14 (305 aa).

Residues 34-147 (KMNLLILRQE…LDTLSHILAR (114 aa)) are a coiled coil.

This sequence belongs to the ATG14 family. Component of the autophagy-specific VPS34 PI3-kinase complex I.

It localises to the preautophagosomal structure membrane. The protein resides in the vacuole membrane. In terms of biological role, required for cytoplasm to vacuole transport (Cvt) and autophagy as a part of the autophagy-specific VPS34 PI3-kinase complex I. This complex is essential to recruit the ATG8-phosphatidylinositol conjugate and the ATG12-ATG5 conjugate to the pre-autophagosomal structure. ATG14 mediates the specific binding of the VPS34 PI3-kinase complex I to the preautophagosomal structure (PAS). This is Autophagy-related protein 14 from Kluyveromyces marxianus (strain DMKU3-1042 / BCC 29191 / NBRC 104275) (Yeast).